Reading from the N-terminus, the 118-residue chain is Vitelline membrane protein Vm32E (118 aa).

A signal peptide spans 1-17; the sequence is MKIVALTLVAFVALAGA. The 40-residue stretch at 36 to 75 folds into the VM domain; the sequence is GYPAPPCPTNYLFSCQPNLAPAPCAQEAQAPAYGSAGAYT.

It belongs to the vitelline membrane family.

Its subcellular location is the secreted. In terms of biological role, major early eggshell protein. The chain is Vitelline membrane protein Vm32E from Drosophila sechellia (Fruit fly).